The following is a 254-amino-acid chain: 3-oxo-5-alpha-steroid 4-dehydrogenase 2 (254 aa).

4 consecutive transmembrane segments (helical) span residues V8–G28, P72–F92, F146–M166, and L206–M226.

The protein belongs to the steroid 5-alpha reductase family.

It localises to the microsome membrane. Its subcellular location is the endoplasmic reticulum membrane. The catalysed reaction is a 3-oxo-5alpha-steroid + NADP(+) = a 3-oxo-Delta(4)-steroid + NADPH + H(+). It catalyses the reaction 17beta-hydroxy-5alpha-androstan-3-one + NADP(+) = testosterone + NADPH + H(+). The enzyme catalyses 5alpha-pregnane-3,20-dione + NADP(+) = progesterone + NADPH + H(+). In terms of biological role, converts testosterone (T) into 5-alpha-dihydrotestosterone (DHT) and progesterone or corticosterone into their corresponding 5-alpha-3-oxosteroids. It plays a central role in sexual differentiation and androgen physiology. This chain is 3-oxo-5-alpha-steroid 4-dehydrogenase 2 (Srd5a2), found in Mus musculus (Mouse).